Consider the following 447-residue polypeptide: MLSQAWALALLCFLLSLWGSLPAVFLPQEQALSILHRPRRANGFLEELLPGSLERECREELCSFEEAHEIFRNEERTRQFWVSYNDGDQCASSPCQNGGSCEDQLRSYICFCPDGFEGRNCETDKQSQLICANDNGGCEQYCGADPGAGRFCWCHEGYALQADGVSCAPTVEYPCGKIPVLEKRNGSKPQGRIVGGHVCPKGECPWQAMLKLNGALLCGGTLVGPAWVVSAAHCFERLRSRGNLTAVLGEHDLSRVEGPEQERRVAQIIVPKQYVPGQTDHDVALLQLAQPVALGDHVAPLCLPDPDFADQTLAFVRFSAVSGWGQLLERGVTARKLMVVLVPRLLTQDCLQQSRQRPGGPVVTDNMFCAGYSDGSKDACKGDSGGPHATRFRGTWFLTGVVSWGEGCAAAGHFGIYTRVSRYTAWLRQLMGHPPSRQGFFQVPLLP.

A signal peptide spans 1 to 23; the sequence is MLSQAWALALLCFLLSLWGSLPA. Positions 24–40 are excised as a propeptide; it reads VFLPQEQALSILHRPRR. A Gla domain is found at 41–85; it reads ANGFLEELLPGSLERECREELCSFEEAHEIFRNEERTRQFWVSYN. Residues glutamate 46, glutamate 47, glutamate 54, glutamate 56, glutamate 59, glutamate 60, glutamate 65, glutamate 66, glutamate 69, glutamate 74, and glutamate 75 each carry the 4-carboxyglutamate modification. A disulfide bridge connects residues cysteine 57 and cysteine 62. The EGF-like 1; calcium-binding domain occupies 86-122; it reads DGDQCASSPCQNGGSCEDQLRSYICFCPDGFEGRNCE. Disulfide bonds link cysteine 90/cysteine 101, cysteine 95/cysteine 110, cysteine 112/cysteine 121, cysteine 131/cysteine 142, cysteine 138/cysteine 152, cysteine 154/cysteine 167, cysteine 175/cysteine 302, cysteine 199/cysteine 204, cysteine 218/cysteine 234, and cysteine 350/cysteine 369. O-linked (Glc...) serine glycosylation occurs at serine 92. A glycan (O-linked (Glc...) serine; alternate) is linked at serine 92. O-linked (Xyl...) serine; alternate glycosylation is present at serine 92. Serine 100 carries an O-linked (Fuc) serine glycan. In terms of domain architecture, EGF-like 2 spans 127 to 168; the sequence is SQLICANDNGGCEQYCGADPGAGRFCWCHEGYALQADGVSCA. An N-linked (GlcNAc...) asparagine glycan is attached at asparagine 185. In terms of domain architecture, Peptidase S1 spans 193 to 432; it reads IVGGHVCPKG…YTAWLRQLMG (240 aa). Histidine 233 serves as the catalytic Charge relay system. N-linked (GlcNAc...) asparagine glycosylation occurs at asparagine 243. Aspartate 282 acts as the Charge relay system in catalysis. Aspartate 378 lines the substrate pocket. An intrachain disulfide couples cysteine 380 to cysteine 408. Serine 384 serves as the catalytic Charge relay system.

This sequence belongs to the peptidase S1 family. As to quaternary structure, heterodimer of a light chain and a heavy chain linked by a disulfide bond. In terms of processing, the vitamin K-dependent, enzymatic carboxylation of some glutamate residues allows the modified protein to bind calcium. Post-translationally, O-glycosylated. O-fucosylated by POFUT1 on a conserved serine or threonine residue found in the consensus sequence C2-X(4,5)-[S/T]-C3 of EGF domains, where C2 and C3 are the second and third conserved cysteines. Can be either O-glucosylated or O-xylosylated at Ser-92 by POGLUT1. In terms of tissue distribution, plasma.

The protein resides in the secreted. The catalysed reaction is Selective cleavage of Arg-|-Ile bond in factor X to form factor Xa.. In terms of biological role, initiates the extrinsic pathway of blood coagulation. Serine protease that circulates in the blood in a zymogen form. Factor VII is converted to factor VIIa by factor Xa, factor XIIa, factor IXa, or thrombin by minor proteolysis. In the presence of tissue factor and calcium ions, factor VIIa then converts factor X to factor Xa by limited proteolysis. Factor VIIa also converts factor IX to factor IXa in the presence of tissue factor and calcium. In Bos taurus (Bovine), this protein is Coagulation factor VII (F7).